Consider the following 230-residue polypeptide: Uracil-DNA glycosylase (230 aa).

The Proton acceptor role is filled by aspartate 72.

It belongs to the uracil-DNA glycosylase (UDG) superfamily. UNG family.

Its subcellular location is the cytoplasm. The catalysed reaction is Hydrolyzes single-stranded DNA or mismatched double-stranded DNA and polynucleotides, releasing free uracil.. In terms of biological role, excises uracil residues from the DNA which can arise as a result of misincorporation of dUMP residues by DNA polymerase or due to deamination of cytosine. The chain is Uracil-DNA glycosylase from Wolinella succinogenes (strain ATCC 29543 / DSM 1740 / CCUG 13145 / JCM 31913 / LMG 7466 / NCTC 11488 / FDC 602W) (Vibrio succinogenes).